The primary structure comprises 661 residues: Peroxisomal acyl-coenzyme A oxidase 1 (661 aa).

Position 26 is a phosphoserine (Ser-26). At Lys-65 the chain carries N6-acetyllysine. N6-succinyllysine is present on residues Lys-89 and Lys-90. Residue Thr-139 participates in FAD binding. The residue at position 159 (Lys-159) is an N6-succinyllysine. FAD is bound at residue Gly-178. The residue at position 216 (Lys-216) is an N6-acetyllysine. Lys-241 is subject to N6-succinyllysine. Lys-255, Lys-267, and Lys-272 each carry N6-acetyllysine. Position 349 is an N6-succinyllysine (Lys-349). Residue Glu-421 is the Proton acceptor of the active site. Residues Lys-437 and Lys-446 each carry the N6-acetyllysine; alternate modification. Lys-437 and Lys-446 each carry N6-succinyllysine; alternate. The residue at position 500 (Lys-500) is an N6-acetyllysine. Residue Lys-512 is modified to N6-acetyllysine; alternate. Lys-512 carries the N6-succinyllysine; alternate modification. Lys-542 bears the N6-succinyllysine mark. Position 637 is an N6-acetyllysine; alternate (Lys-637). Lys-637 is subject to N6-succinyllysine; alternate. Lys-643 carries the N6-succinyllysine modification. Position 649 is a phosphoserine (Ser-649). Residue Lys-652 is modified to N6-acetyllysine. At Lys-655 the chain carries N6-succinyllysine. The Microbody targeting signal signature appears at 659 to 661 (SKL).

The protein belongs to the acyl-CoA oxidase family. As to quaternary structure, homodimer. Interacts with LONP2. The cofactor is FAD. Highest levels of isoform 1 are found in liver and kidney while highest levels of isoform 2 are found in white adipose tissue. Isoform 1 is expressed at higher levels than isoform 2 in liver and kidney while isoform 2 is expressed at higher levels in brain, heart, lung, muscle, white adipose tissue and testis.

Its subcellular location is the peroxisome. It catalyses the reaction a 2,3-saturated acyl-CoA + O2 = a (2E)-enoyl-CoA + H2O2. It carries out the reaction hexadecanoyl-CoA + O2 = (2E)-hexadecenoyl-CoA + H2O2. The catalysed reaction is dodecanoyl-CoA + O2 = (2E)-dodecenoyl-CoA + H2O2. The enzyme catalyses octanoyl-CoA + O2 = (2E)-octenoyl-CoA + H2O2. It catalyses the reaction decanoyl-CoA + O2 = (2E)-decenoyl-CoA + H2O2. It carries out the reaction tetradecanoyl-CoA + O2 = (2E)-tetradecenoyl-CoA + H2O2. The catalysed reaction is hexadecanedioyl-CoA + O2 = (2E)-hexadecenedioyl-CoA + H2O2. The enzyme catalyses tetracosanoyl-CoA + O2 = (2E)-tetracosenoyl-CoA + H2O2. It catalyses the reaction glutaryl-CoA + O2 = (2E)-glutaconyl-CoA + H2O2. It carries out the reaction hexanoyl-CoA + O2 = (2E)-hexenoyl-CoA + H2O2. The catalysed reaction is octadecanoyl-CoA + O2 = (2E)-octadecenoyl-CoA + H2O2. The enzyme catalyses (5Z,8Z,11Z,14Z,17Z)-eicosapentaenoyl-CoA + O2 = (2E,5Z,8Z,11Z,14Z,17Z)-icosahexaenoyl-CoA + H2O2. It catalyses the reaction (6Z,9Z,12Z,15Z,18Z,21Z)-tetracosahexaenoyl-CoA + O2 = (2E,6Z,9Z,12Z,15Z,18Z,21Z)-tetracosaheptaenoyl-CoA + H2O2. It functions in the pathway lipid metabolism; peroxisomal fatty acid beta-oxidation. Involved in the initial and rate-limiting step of peroxisomal beta-oxidation of straight-chain saturated and unsaturated very-long-chain fatty acids. Catalyzes the desaturation of fatty acyl-CoAs such as palmitoyl-CoA (hexadecanoyl-CoA) to 2-trans-enoyl-CoAs ((2E)-enoyl-CoAs) such as (2E)-hexadecenoyl-CoA, and donates electrons directly to molecular oxygen (O(2)), thereby producing hydrogen peroxide (H(2)O(2)). In terms of biological role, shows highest activity against medium-chain fatty acyl-CoAs. Shows optimum activity with a chain length of 10 carbons (decanoyl-CoA) in vitro. Functionally, is active against a much broader range of substrates and shows activity towards long-chain acyl-CoAs. The polypeptide is Peroxisomal acyl-coenzyme A oxidase 1 (Mus musculus (Mouse)).